Consider the following 436-residue polypeptide: 3-ketoacyl-CoA thiolase (436 aa).

Cys99 (acyl-thioester intermediate) is an active-site residue. Active-site proton acceptor residues include His392 and Cys422.

This sequence belongs to the thiolase-like superfamily. Thiolase family. In terms of assembly, heterotetramer of two alpha chains (FadJ) and two beta chains (FadI).

It is found in the cytoplasm. The catalysed reaction is an acyl-CoA + acetyl-CoA = a 3-oxoacyl-CoA + CoA. It participates in lipid metabolism; fatty acid beta-oxidation. Functionally, catalyzes the final step of fatty acid oxidation in which acetyl-CoA is released and the CoA ester of a fatty acid two carbons shorter is formed. The protein is 3-ketoacyl-CoA thiolase of Escherichia coli (strain K12 / MC4100 / BW2952).